A 198-amino-acid polypeptide reads, in one-letter code: Glycerol-3-phosphate acyltransferase (198 aa).

5 consecutive transmembrane segments (helical) span residues 1–21 (MTII…GFLF), 77–97 (HLFE…PIWL), 111–131 (MFIA…LIIL), 136–156 (IVSL…FLDI), and 157–177 (GVTN…VILK).

It belongs to the PlsY family. Probably interacts with PlsX.

Its subcellular location is the cell inner membrane. The catalysed reaction is an acyl phosphate + sn-glycerol 3-phosphate = a 1-acyl-sn-glycero-3-phosphate + phosphate. The protein operates within lipid metabolism; phospholipid metabolism. Functionally, catalyzes the transfer of an acyl group from acyl-phosphate (acyl-PO(4)) to glycerol-3-phosphate (G3P) to form lysophosphatidic acid (LPA). This enzyme utilizes acyl-phosphate as fatty acyl donor, but not acyl-CoA or acyl-ACP. The chain is Glycerol-3-phosphate acyltransferase from Prochlorococcus marinus (strain MIT 9515).